A 180-amino-acid chain; its full sequence is Ribulose bisphosphate carboxylase small subunit, chloroplastic 4 (180 aa).

The transit peptide at 1–56 (MASSIVSSAAVATRANGAQASMVGPFTGLKSTASFPVSRKQNLDITSIASNGGRVR) directs the protein to the chloroplast.

Belongs to the RuBisCO small chain family. In terms of assembly, heterohexadecamer of 8 large and 8 small subunits.

Its subcellular location is the plastid. The protein localises to the chloroplast. Its function is as follows. RuBisCO catalyzes two reactions: the carboxylation of D-ribulose 1,5-bisphosphate, the primary event in carbon dioxide fixation, as well as the oxidative fragmentation of the pentose substrate. Both reactions occur simultaneously and in competition at the same active site. Although the small subunit is not catalytic it is essential for maximal activity. This chain is Ribulose bisphosphate carboxylase small subunit, chloroplastic 4, found in Solanum tuberosum (Potato).